We begin with the raw amino-acid sequence, 416 residues long: tRNA(Met) cytidine acetate ligase (416 aa).

ATP is bound by residues 7–20, Gly101, Asn163, and Arg188; that span reads VVEY…HLYH.

It belongs to the TmcAL family.

The protein resides in the cytoplasm. The enzyme catalyses cytidine(34) in elongator tRNA(Met) + acetate + ATP = N(4)-acetylcytidine(34) in elongator tRNA(Met) + AMP + diphosphate. Functionally, catalyzes the formation of N(4)-acetylcytidine (ac(4)C) at the wobble position of elongator tRNA(Met), using acetate and ATP as substrates. First activates an acetate ion to form acetyladenylate (Ac-AMP) and then transfers the acetyl group to tRNA to form ac(4)C34. The protein is tRNA(Met) cytidine acetate ligase of Bacillus licheniformis (strain ATCC 14580 / DSM 13 / JCM 2505 / CCUG 7422 / NBRC 12200 / NCIMB 9375 / NCTC 10341 / NRRL NRS-1264 / Gibson 46).